Consider the following 650-residue polypeptide: Glycoprotein 105 (650 aa).

A helical; Signal-anchor for type II membrane protein membrane pass occupies residues 1–32 (MATARLGVMRPPRSCALIFLCAFSMATAPTNA). Residues 33–650 (TAHRRAGTVK…RFPHVGIGSY (618 aa)) lie on the Virion surface side of the membrane. Residues N52, N290, N332, N338, N359, N422, N516, and N552 are each glycosylated (N-linked (GlcNAc...) asparagine; by host).

In terms of assembly, associates with the gp82-gp105 complex. N-Glycosylated.

The protein resides in the virion membrane. The sequence is that of Glycoprotein 105 (U96/U97/U98/U99/U100) from Homo sapiens (Human).